A 161-amino-acid chain; its full sequence is Cyclic pyranopterin monophosphate synthase (161 aa).

Substrate contacts are provided by residues 75–77 (MCH) and 115–116 (ME). Asp-130 is an active-site residue.

The protein belongs to the MoaC family. Homohexamer; trimer of dimers.

It carries out the reaction (8S)-3',8-cyclo-7,8-dihydroguanosine 5'-triphosphate = cyclic pyranopterin phosphate + diphosphate. It functions in the pathway cofactor biosynthesis; molybdopterin biosynthesis. Catalyzes the conversion of (8S)-3',8-cyclo-7,8-dihydroguanosine 5'-triphosphate to cyclic pyranopterin monophosphate (cPMP). The protein is Cyclic pyranopterin monophosphate synthase of Bacillus mycoides (strain KBAB4) (Bacillus weihenstephanensis).